The following is a 150-amino-acid chain: Large ribosomal subunit protein uL13 (150 aa).

The interval 129–150 is disordered; sequence AEHPHAAQQPKPLQLDPAATAQ.

This sequence belongs to the universal ribosomal protein uL13 family. In terms of assembly, part of the 50S ribosomal subunit.

In terms of biological role, this protein is one of the early assembly proteins of the 50S ribosomal subunit, although it is not seen to bind rRNA by itself. It is important during the early stages of 50S assembly. In Synechococcus sp. (strain WH7803), this protein is Large ribosomal subunit protein uL13.